A 112-amino-acid chain; its full sequence is MAHFAVGFLTLGLLVPVLTWPVSAPLLVIPVALSASIIRLRTLADERGVTVRTLVGSRAVRWDDIDGLRFHRGSWARATLKDGTELRLPAVTFATLPHLTEASSGRVPNPYR.

It is found in the secreted. The sequence is that of Low molecular weight protein antigen 6 (cfp6) from Mycobacterium bovis (strain ATCC BAA-935 / AF2122/97).